The following is a 168-amino-acid chain: Plastocyanin, chloroplastic (168 aa).

Residues 1 to 70 (MASVAAAAVS…SSLLLVASAN (70 aa)) constitute a chloroplast transit peptide. One can recognise a Plastocyanin-like domain in the interval 71–168 (AATVKMGGDD…AGMKGVVTVS (98 aa)). Cu cation-binding residues include H108, C153, H156, and M161.

It belongs to the plastocyanin family. Cu(2+) is required as a cofactor.

The protein resides in the plastid. Its subcellular location is the chloroplast thylakoid membrane. Its function is as follows. Participates in electron transfer between P700 and the cytochrome b6-f complex in photosystem I. The sequence is that of Plastocyanin, chloroplastic (PETE) from Physcomitrium patens (Spreading-leaved earth moss).